Consider the following 275-residue polypeptide: Formamidopyrimidine-DNA glycosylase (275 aa).

Pro2 serves as the catalytic Schiff-base intermediate with DNA. The active-site Proton donor is Glu3. The active-site Proton donor; for beta-elimination activity is Lys58. Residues His91, Arg109, and Lys154 each coordinate DNA. The segment at 240 to 274 (AVYERAGLACRVCGTPIRRLVQGQRATYFCPHCQK) adopts an FPG-type zinc-finger fold. Arg264 acts as the Proton donor; for delta-elimination activity in catalysis.

This sequence belongs to the FPG family. As to quaternary structure, monomer. Zn(2+) is required as a cofactor.

It catalyses the reaction Hydrolysis of DNA containing ring-opened 7-methylguanine residues, releasing 2,6-diamino-4-hydroxy-5-(N-methyl)formamidopyrimidine.. The catalysed reaction is 2'-deoxyribonucleotide-(2'-deoxyribose 5'-phosphate)-2'-deoxyribonucleotide-DNA = a 3'-end 2'-deoxyribonucleotide-(2,3-dehydro-2,3-deoxyribose 5'-phosphate)-DNA + a 5'-end 5'-phospho-2'-deoxyribonucleoside-DNA + H(+). Functionally, involved in base excision repair of DNA damaged by oxidation or by mutagenic agents. Acts as a DNA glycosylase that recognizes and removes damaged bases. Has a preference for oxidized purines, such as 7,8-dihydro-8-oxoguanine (8-oxoG). Has AP (apurinic/apyrimidinic) lyase activity and introduces nicks in the DNA strand. Cleaves the DNA backbone by beta-delta elimination to generate a single-strand break at the site of the removed base with both 3'- and 5'-phosphates. The chain is Formamidopyrimidine-DNA glycosylase from Bordetella avium (strain 197N).